Reading from the N-terminus, the 378-residue chain is Mannitol-1-phosphate 5-dehydrogenase (378 aa).

An NAD(+)-binding site is contributed by 4 to 15 (SVHFGAGNIGRG).

It belongs to the mannitol dehydrogenase family.

The enzyme catalyses D-mannitol 1-phosphate + NAD(+) = beta-D-fructose 6-phosphate + NADH + H(+). In Streptococcus pneumoniae (strain JJA), this protein is Mannitol-1-phosphate 5-dehydrogenase.